The following is a 138-amino-acid chain: Large ribosomal subunit protein uL14m (138 aa).

Belongs to the universal ribosomal protein uL14 family. As to quaternary structure, component of the mitochondrial large ribosomal subunit (mt-LSU). Mature yeast 74S mitochondrial ribosomes consist of a small (37S) and a large (54S) subunit. The 37S small subunit contains a 15S ribosomal RNA (15S mt-rRNA) and 34 different proteins. The 54S large subunit contains a 21S rRNA (21S mt-rRNA) and 46 different proteins.

Its subcellular location is the mitochondrion. In terms of biological role, component of the mitochondrial ribosome (mitoribosome), a dedicated translation machinery responsible for the synthesis of mitochondrial genome-encoded proteins, including at least some of the essential transmembrane subunits of the mitochondrial respiratory chain. The mitoribosomes are attached to the mitochondrial inner membrane and translation products are cotranslationally integrated into the membrane. This is Large ribosomal subunit protein uL14m (MRPL38) from Saccharomyces cerevisiae (strain ATCC 204508 / S288c) (Baker's yeast).